The sequence spans 245 residues: 1-(5-phosphoribosyl)-5-[(5-phosphoribosylamino)methylideneamino] imidazole-4-carboxamide isomerase (245 aa).

Asp-8 functions as the Proton acceptor in the catalytic mechanism. The active-site Proton donor is the Asp-129.

The protein belongs to the HisA/HisF family.

The protein localises to the cytoplasm. It carries out the reaction 1-(5-phospho-beta-D-ribosyl)-5-[(5-phospho-beta-D-ribosylamino)methylideneamino]imidazole-4-carboxamide = 5-[(5-phospho-1-deoxy-D-ribulos-1-ylimino)methylamino]-1-(5-phospho-beta-D-ribosyl)imidazole-4-carboxamide. The protein operates within amino-acid biosynthesis; L-histidine biosynthesis; L-histidine from 5-phospho-alpha-D-ribose 1-diphosphate: step 4/9. The protein is 1-(5-phosphoribosyl)-5-[(5-phosphoribosylamino)methylideneamino] imidazole-4-carboxamide isomerase of Rhodopseudomonas palustris (strain BisB5).